Consider the following 453-residue polypeptide: UDP-glycosyltransferase 76E1 (453 aa).

UDP-alpha-D-glucose contacts are provided by residues S272, A331–Q333, H348–E356, and T370–Q373.

This sequence belongs to the UDP-glycosyltransferase family.

Functionally, possesses low quercetin 3-O-glucosyltransferase and 7-O-glucosyltransferase activities in vitro. The protein is UDP-glycosyltransferase 76E1 (UGT76E1) of Arabidopsis thaliana (Mouse-ear cress).